Consider the following 527-residue polypeptide: Phospholipase A1-Igamma3, chloroplastic (527 aa).

The transit peptide at 1–52 (MASLSLPITLKNPRFFSSSPQNIFKTQPQTLVLTTKFKTCSIICSSSCTSIS) directs the protein to the chloroplast. Low complexity predominate over residues 55–65 (TTQQKQSNKQT). Residues 55–82 (TTQQKQSNKQTHVSDNKREEKAEEEEEE) are disordered. A compositionally biased stretch (basic and acidic residues) spans 66–75 (HVSDNKREEK). Positions 300–304 (GHSLG) match the GXSXG motif. Ser302 serves as the catalytic Acyl-ester intermediate. Active-site charge relay system residues include Asp366 and His423.

Belongs to the AB hydrolase superfamily. Lipase family. In terms of tissue distribution, highly expressed in flowers. Lower levels in seedlings, leaves and stems.

The protein resides in the plastid. Its subcellular location is the chloroplast. The catalysed reaction is 1,2-dihexadecanoyl-sn-glycero-3-phosphocholine + H2O = 2-hexadecanoyl-sn-glycero-3-phosphocholine + hexadecanoate + H(+). It carries out the reaction a 1,2-diacyl-3-O-(beta-D-galactosyl)-sn-glycerol + H2O = an acyl-3-O-(beta-D-galactosyl)-sn-glycerol + a fatty acid + H(+). It catalyses the reaction a 1,2-diacyl-3-O-[alpha-D-galactosyl-(1-&gt;6)-beta-D-galactosyl]-sn-glycerol + H2O = acyl-3-O-[alpha-D-galactosyl-(1-&gt;6)-beta-D-galactosyl]-sn-glycerol + a fatty acid + H(+). In terms of biological role, acylhydrolase that catalyzes the hydrolysis of phosphatidylcholine at the sn-1 position. Moderate activity toward phosphatidylcholine (PC), monogalactosyldiacylglycerol (MGDG), digalactosyldiacylglycerol (DGDG) and triacylglycerol (TAG). This Arabidopsis thaliana (Mouse-ear cress) protein is Phospholipase A1-Igamma3, chloroplastic.